The primary structure comprises 79 residues: Putative Fis-like DNA-binding protein (79 aa).

The H-T-H motif DNA-binding region spans 55-74 (QSKASVMLGLNRNTLRKKLI).

Belongs to the transcriptional regulatory Fis family.

The sequence is that of Putative Fis-like DNA-binding protein from Neisseria meningitidis serogroup A / serotype 4A (strain DSM 15465 / Z2491).